A 562-amino-acid chain; its full sequence is Adenylate kinase isoenzyme 5 (562 aa).

Adenylate kinase stretches follow at residues 133-316 and 377-559; these read KIIL…VAVD and KIIF…TAID. Residue 142 to 147 participates in ATP binding; the sequence is GSGKGT. Positions 162 to 193 are NMP 1; the sequence is SVGELLRKKIHSASSNRKWSLIAKIITNGELA. AMP-binding positions include arginine 168, 191–193, 219–222, and glutamine 226; these read ELA and GFPR. The tract at residues 256–266 is LID 1; it reads KRAEQQGRPDD. Position 257 (arginine 257) interacts with ATP. AMP is bound by residues arginine 263 and arginine 274. 386–391 is an ATP binding site; the sequence is GSGKGT. The NMP 2 stretch occupies residues 406–435; the sequence is STGELLRQELTSESERSKLIRDIMERGDLV. Residues threonine 407, arginine 412, 433 to 435, 462 to 465, and glutamine 469 each bind AMP; these read DLV and GYPR. Residues 499–509 form an LID 2 region; it reads QRSQSSQRGED. Arginine 500 contributes to the ATP binding site. AMP-binding residues include arginine 506 and arginine 517. Glycine 545 contributes to the ATP binding site.

It belongs to the adenylate kinase family. Monomer. Interacts with YWHAZ. Brain specific.

It localises to the cytoplasm. It catalyses the reaction AMP + ATP = 2 ADP. It carries out the reaction a 2'-deoxyribonucleoside 5'-diphosphate + ATP = a 2'-deoxyribonucleoside 5'-triphosphate + ADP. The enzyme catalyses a ribonucleoside 5'-diphosphate + ATP = a ribonucleoside 5'-triphosphate + ADP. Nucleoside monophosphate (NMP) kinase that catalyzes the reversible transfer of the terminal phosphate group between nucleoside triphosphates and monophosphates. Active on AMP and dAMP with ATP as a donor. When GTP is used as phosphate donor, the enzyme phosphorylates AMP, CMP, and to a small extent dCMP. Also displays broad nucleoside diphosphate kinase activity. The protein is Adenylate kinase isoenzyme 5 (Ak5) of Mus musculus (Mouse).